The primary structure comprises 34 residues: Histone H1, sperm (34 aa).

The tract at residues 1–34 (PASPQKRAASPRRSPKKSPRKSPKKSPRKRSASP) is disordered. The span at 9 to 34 (ASPRRSPKKSPRKSPKKSPRKRSASP) shows a compositional bias: basic residues.

This sequence belongs to the histone H1/H5 family. Sperm.

Its subcellular location is the nucleus. It is found in the chromosome. In terms of biological role, histones H1 are necessary for the condensation of nucleosome chains into higher-order structures. This chain is Histone H1, sperm, found in Strongylocentrotus purpuratus (Purple sea urchin).